We begin with the raw amino-acid sequence, 634 residues long: tRNA uridine 5-carboxymethylaminomethyl modification enzyme MnmG (634 aa).

14 to 19 (GGGHAG) is a binding site for FAD. An NAD(+)-binding site is contributed by 279–293 (GPRYCPSIEDKVVRF).

Belongs to the MnmG family. As to quaternary structure, homodimer. Heterotetramer of two MnmE and two MnmG subunits. The cofactor is FAD.

It is found in the cytoplasm. Functionally, NAD-binding protein involved in the addition of a carboxymethylaminomethyl (cmnm) group at the wobble position (U34) of certain tRNAs, forming tRNA-cmnm(5)s(2)U34. The chain is tRNA uridine 5-carboxymethylaminomethyl modification enzyme MnmG from Xanthomonas campestris pv. campestris (strain 8004).